A 332-amino-acid polypeptide reads, in one-letter code: uncharacterized protein (332 aa).

2 stretches are compositionally biased toward acidic residues: residues Glu-290 to Gly-314 and Glu-323 to Glu-332. Residues Glu-290–Glu-332 form a disordered region.

Belongs to the mimivirus L17x/L18x family.

This is an uncharacterized protein from Acanthamoeba polyphaga mimivirus (APMV).